A 262-amino-acid polypeptide reads, in one-letter code: uncharacterized protein (262 aa).

Positions 1–22 are cleaved as a signal peptide; the sequence is MMNNSITLLLALLVGLVGFAFT.

It belongs to the IIV-6 117L family.

This is an uncharacterized protein from Aedes vexans (Inland floodwater mosquito).